Here is a 779-residue protein sequence, read N- to C-terminus: Kazrin (779 aa).

Residues 79–261 (AQVLLREEVV…LATLTKDVPK (183 aa)) are a coiled coil. The tract at residues 295 to 366 (QQTLYHSHPP…PGPVQKSLHN (72 aa)) is disordered. Phosphoserine is present on residues serine 356, serine 371, and serine 391. Residues 403–429 (KSLDPGLFDDSDSQCSPTRHSLSLSEG) are disordered. Residues 415-426 (SQCSPTRHSLSL) show a composition bias toward polar residues. SAM domains lie at 450–515 (WKAG…YRDA), 528–592 (DHHW…LYQV), and 616–683 (WTNQ…STIF). A disordered region spans residues 685–779 (PSNSTGIRES…GYGSLEVTNV (95 aa)). A compositionally biased stretch (basic and acidic residues) spans 736 to 746 (SSKEPDFHDDY).

It belongs to the kazrin family. As to expression, expressed in skin interfollicular epidermis and hair follicles. Expressed in tongue epithelium basal suprabasal layers.

It localises to the cell junction. It is found in the nucleus. The protein resides in the cytoplasm. The protein localises to the cytoskeleton. In terms of biological role, component of the cornified envelope of keratinocytes. May be involved in the interplay between adherens junctions and desmosomes. The function in the nucleus is not known. This is Kazrin (Kazn) from Mus musculus (Mouse).